Here is a 917-residue protein sequence, read N- to C-terminus: Translation initiation factor IF-2 (917 aa).

The disordered stretch occupies residues 241–312 (EEAKKGTLHK…GGWRSGGGRK (72 aa)). Residues 252-262 (AKAEGAEDKKK) are compositionally biased toward basic and acidic residues. The segment covering 274 to 283 (SSETSSTWQE) has biased composition (polar residues). Residues 298–308 (TSGGVGGWRSG) show a composition bias toward gly residues. A tr-type G domain is found at 415–582 (PRPPVVTVMG…NVLLQAEILE (168 aa)). The segment at 424–431 (GHVDHGKT) is G1. 424–431 (GHVDHGKT) is a binding site for GTP. The tract at residues 449–453 (GITQH) is G2. The G3 stretch occupies residues 470–473 (DTPG). GTP is bound by residues 470–474 (DTPGH) and 524–527 (NKID). The segment at 524-527 (NKID) is G4. A G5 region spans residues 560-562 (SAK).

The protein belongs to the TRAFAC class translation factor GTPase superfamily. Classic translation factor GTPase family. IF-2 subfamily.

The protein localises to the cytoplasm. One of the essential components for the initiation of protein synthesis. Protects formylmethionyl-tRNA from spontaneous hydrolysis and promotes its binding to the 30S ribosomal subunits. Also involved in the hydrolysis of GTP during the formation of the 70S ribosomal complex. This Polynucleobacter necessarius subsp. necessarius (strain STIR1) protein is Translation initiation factor IF-2.